Here is a 156-residue protein sequence, read N- to C-terminus: Small ribosomal subunit protein uS7 (156 aa).

This sequence belongs to the universal ribosomal protein uS7 family. Part of the 30S ribosomal subunit. Contacts proteins S9 and S11.

Its function is as follows. One of the primary rRNA binding proteins, it binds directly to 16S rRNA where it nucleates assembly of the head domain of the 30S subunit. Is located at the subunit interface close to the decoding center, probably blocks exit of the E-site tRNA. The chain is Small ribosomal subunit protein uS7 from Clavibacter michiganensis subsp. michiganensis (strain NCPPB 382).